Here is an 81-residue protein sequence, read N- to C-terminus: Cytochrome c6 (81 aa).

Residues cysteine 10, cysteine 13, histidine 14, and methionine 54 each coordinate heme c.

The protein belongs to the cytochrome c family. PetJ subfamily. As to quaternary structure, monomer. Binds 1 heme c group covalently per subunit.

Its subcellular location is the cellular thylakoid lumen. In terms of biological role, functions as an electron carrier between membrane-bound cytochrome b6-f and photosystem I in oxygenic photosynthesis. The chain is Cytochrome c6 (petJ) from Microcystis aeruginosa.